A 504-amino-acid chain; its full sequence is Glucose-6-phosphate isomerase (504 aa).

The active-site Proton donor is the Glu-333. Catalysis depends on residues His-364 and Lys-473.

The protein belongs to the GPI family.

It localises to the cytoplasm. It catalyses the reaction alpha-D-glucose 6-phosphate = beta-D-fructose 6-phosphate. Its pathway is carbohydrate biosynthesis; gluconeogenesis. It participates in carbohydrate degradation; glycolysis; D-glyceraldehyde 3-phosphate and glycerone phosphate from D-glucose: step 2/4. In terms of biological role, catalyzes the reversible isomerization of glucose-6-phosphate to fructose-6-phosphate. The sequence is that of Glucose-6-phosphate isomerase from Xanthomonas campestris pv. campestris (strain B100).